The primary structure comprises 556 residues: Formate--tetrahydrofolate ligase (556 aa).

64–71 (TPAGEGKT) serves as a coordination point for ATP.

The protein belongs to the formate--tetrahydrofolate ligase family.

It carries out the reaction (6S)-5,6,7,8-tetrahydrofolate + formate + ATP = (6R)-10-formyltetrahydrofolate + ADP + phosphate. It participates in one-carbon metabolism; tetrahydrofolate interconversion. This chain is Formate--tetrahydrofolate ligase, found in Haemophilus ducreyi (strain 35000HP / ATCC 700724).